Consider the following 232-residue polypeptide: Large ribosomal subunit protein uL1 (232 aa).

This sequence belongs to the universal ribosomal protein uL1 family. In terms of assembly, part of the 50S ribosomal subunit.

Its function is as follows. Binds directly to 23S rRNA. The L1 stalk is quite mobile in the ribosome, and is involved in E site tRNA release. Functionally, protein L1 is also a translational repressor protein, it controls the translation of the L11 operon by binding to its mRNA. In Bacteroides fragilis (strain ATCC 25285 / DSM 2151 / CCUG 4856 / JCM 11019 / LMG 10263 / NCTC 9343 / Onslow / VPI 2553 / EN-2), this protein is Large ribosomal subunit protein uL1.